Reading from the N-terminus, the 416-residue chain is Serine hydroxymethyltransferase (416 aa).

(6S)-5,6,7,8-tetrahydrofolate contacts are provided by residues Leu-117 and 121–123 (GHL). Residue Lys-226 is modified to N6-(pyridoxal phosphate)lysine.

It belongs to the SHMT family. As to quaternary structure, homodimer. It depends on pyridoxal 5'-phosphate as a cofactor.

It is found in the cytoplasm. The enzyme catalyses (6R)-5,10-methylene-5,6,7,8-tetrahydrofolate + glycine + H2O = (6S)-5,6,7,8-tetrahydrofolate + L-serine. Its pathway is one-carbon metabolism; tetrahydrofolate interconversion. It functions in the pathway amino-acid biosynthesis; glycine biosynthesis; glycine from L-serine: step 1/1. In terms of biological role, catalyzes the reversible interconversion of serine and glycine with tetrahydrofolate (THF) serving as the one-carbon carrier. This reaction serves as the major source of one-carbon groups required for the biosynthesis of purines, thymidylate, methionine, and other important biomolecules. Also exhibits THF-independent aldolase activity toward beta-hydroxyamino acids, producing glycine and aldehydes, via a retro-aldol mechanism. This Leptospira biflexa serovar Patoc (strain Patoc 1 / Ames) protein is Serine hydroxymethyltransferase.